The following is an 805-amino-acid chain: Probable exo-1,4-beta-xylosidase xlnD (805 aa).

The first 17 residues, 1–17 (MAVAALALLALLPQALG), serve as a signal peptide directing secretion. Asparagine 20, asparagine 115, asparagine 140, asparagine 235, and asparagine 244 each carry an N-linked (GlcNAc...) asparagine glycan. Aspartate 308 is a catalytic residue. Asparagine 350, asparagine 383, asparagine 405, asparagine 434, asparagine 445, asparagine 486, asparagine 490, asparagine 622, asparagine 653, asparagine 667, asparagine 689, and asparagine 711 each carry an N-linked (GlcNAc...) asparagine glycan.

It belongs to the glycosyl hydrolase 3 family.

Its subcellular location is the secreted. The enzyme catalyses Hydrolysis of (1-&gt;4)-beta-D-xylans, to remove successive D-xylose residues from the non-reducing termini.. The protein operates within glycan degradation; xylan degradation. Xylan 1,4-beta-xylosidase involved in the hydrolysis of xylan, a major structural heterogeneous polysaccharide found in plant biomass representing the second most abundant polysaccharide in the biosphere, after cellulose. The polypeptide is Probable exo-1,4-beta-xylosidase xlnD (xlnD) (Aspergillus aculeatus).